Here is a 553-residue protein sequence, read N- to C-terminus: HTH-type transcriptional regulator SgrR (553 aa).

Positions 1–113 constitute an HTH marR-type domain; that stretch reads MSTSRLQQQF…RQMLLSQLGR (113 aa). Residues 26–49 constitute a DNA-binding region (H-T-H motif); it reads LQALAEVLNCSRRHVRSLLGKMQH. The tract at residues 163-494 is solute-binding; the sequence is ELEPDLSHHW…EELHQDIESW (332 aa).

Functionally, activates the small RNA gene sgrS under glucose-phosphate stress conditions as well as yfdZ. Represses its own transcription under both stress and non-stress conditions. Might act as a sensor of the intracellular accumulation of phosphoglucose by binding these molecules in its C-terminal solute-binding domain. This chain is HTH-type transcriptional regulator SgrR, found in Yersinia pestis bv. Antiqua (strain Antiqua).